The following is a 705-amino-acid chain: MTKLGFLRLSYEKQDTLLKLLILSMAAVLSFSTRLFAVLRFESVIHEFDPYFNYRTTRFLAEEGFYKFHNWFDDRAWYPLGRIIGGTIYPGLMITSAAIYHVLHFFHITIDIRNVCVFLAPLFSSFTTIVTYHLTKELKDAGAGLLAAAMIAVVPGYISRSVAGSYDNEGIAIFCMLLTYYMWIKAVKTGSIYWAAKCALAYFYMVSSWGGYVFLINLIPLHVLVLMLTGRFSHRIYVAYCTVYCLGTILSMQISFVGFQPVLSSEHMAAFGVFGLCQIHAFVDYLRSKLNPQQFEVLFRSVISLVGFVLLTVGALLMLTGKISPWTGRFYSLLDPSYAKNNIPIIASVSEHQPTTWSSYYFDLQLLVFMFPVGLYYCFSNLSDARIFIIMYGVTSMYFSAVMVRLMLVLAPVMCILSGIGVSQVLSTYMKNLDISRPDKKSKKQQDSTYPIKNEVASGMILVMAFFLITYTFHSTWVTSEAYSSPSIVLSARGGDGSRIIFDDFREAYYWLRHNTPEDAKVMSWWDYGYQITAMANRTILVDNNTWNNTHISRVGQAMASTEEKAYEIMRELDVSYVLVIFGGLTGYSSDDINKFLWMVRIGGSTDTGKHIKEHDYYTPTGEFRVDREGSPVLLNCLMYKMCYYRFGQVYTEAKRPPGFDRVRNAEIGNKDFELDVLEEAYTTEHWLVRIYKVKDLDNRGLSRT.

At 1-15 (MTKLGFLRLSYEKQD) the chain is on the cytoplasmic side. A helical membrane pass occupies residues 16–34 (TLLKLLILSMAAVLSFSTR). Over 35–111 (LFAVLRFESV…VLHFFHITID (77 aa)) the chain is Lumenal. Residues 47 to 49 (EFD) carry the DXD motif 1 motif. Asp-49 contributes to the Mn(2+) binding site. The chain crosses the membrane as a helical span at residues 112–141 (IRNVCVFLAPLFSSFTTIVTYHLTKELKDA). A topological domain (cytoplasmic) is located at residue Gly-142. Residues 143 to 158 (AGLLAAAMIAVVPGYI) traverse the membrane as a helical segment. Over 159 to 170 (SRSVAGSYDNEG) the chain is Lumenal. Mn(2+) is bound by residues Asp-167 and Glu-169. Positions 167–169 (DNE) match the DXD motif 2 motif. Residues 171 to 188 (IAIFCMLLTYYMWIKAVK) form a helical membrane-spanning segment. Residues 189-191 (TGS) are Cytoplasmic-facing. A helical transmembrane segment spans residues 192 to 207 (IYWAAKCALAYFYMVS). The Lumenal portion of the chain corresponds to 208–210 (SWG). Residues 211 to 229 (GYVFLINLIPLHVLVLMLT) form a helical membrane-spanning segment. Residues 230-234 (GRFSH) are Cytoplasmic-facing. A helical transmembrane segment spans residues 235–253 (RIYVAYCTVYCLGTILSMQ). Topologically, residues 254-265 (ISFVGFQPVLSS) are lumenal. A helical membrane pass occupies residues 266 to 283 (EHMAAFGVFGLCQIHAFV). The Cytoplasmic portion of the chain corresponds to 284-298 (DYLRSKLNPQQFEVL). A helical membrane pass occupies residues 299–317 (FRSVISLVGFVLLTVGALL). Topologically, residues 318 to 356 (MLTGKISPWTGRFYSLLDPSYAKNNIPIIASVSEHQPTT) are lumenal. The SVSE motif motif lies at 348–351 (SVSE). The helical transmembrane segment at 357–379 (WSSYYFDLQLLVFMFPVGLYYCF) threads the bilayer. At 380–385 (SNLSDA) the chain is on the cytoplasmic side. Residues 386–402 (RIFIIMYGVTSMYFSAV) traverse the membrane as a helical segment. Topologically, residues 403 to 406 (MVRL) are lumenal. Position 405 (Arg-405) interacts with dolichyl diphosphooligosaccharide. The chain crosses the membrane as a helical span at residues 407–428 (MLVLAPVMCILSGIGVSQVLST). At 429–453 (YMKNLDISRPDKKSKKQQDSTYPIK) the chain is on the cytoplasmic side. Residues 454 to 473 (NEVASGMILVMAFFLITYTF) traverse the membrane as a helical segment. Topologically, residues 474 to 705 (HSTWVTSEAY…DLDNRGLSRT (232 aa)) are lumenal. The interacts with target acceptor peptide in protein substrate stretch occupies residues 525–527 (WWD). The WWDYG motif signature appears at 525-529 (WWDYG). Residue Tyr-530 participates in dolichyl diphosphooligosaccharide binding. Asn-537 and Asn-544 each carry an N-linked (GlcNAc...) asparagine glycan. Asn-548 carries an N-linked (GlcNAc...) (high mannose) asparagine glycan. Positions 592–599 (DINKFLWM) match the DK motif motif.

This sequence belongs to the STT3 family. In terms of assembly, component of the oligosaccharyltransferase (OST) complex. There are 2 OST complexes, OST-A and OST-B, which contain STT3A or STT3B as catalytic subunit, respectively. OST-A and OST-B contain common core subunits RPN1, RPN2, OST48, OST4, DAD1 and TMEM258, and OST-A contains DC2/OSTC and KRTCAP2/KCP2 specific accessory subunits. OST-A complex assembly occurs through the formation of 3 subcomplexes. Subcomplex 1 contains RPN1 and TMEM258, subcomplex 2 contains the OST-A-specific subunits STT3A, DC2/OSTC, and KCP2 as well as the core subunit OST4, and subcomplex 3 contains RPN2, DAD1, and OST48. The OST-A complex can form stable complexes with the Sec61 complex or with both the Sec61 and TRAP complexes. Requires Mg(2+) as cofactor. Mn(2+) serves as cofactor.

The protein localises to the endoplasmic reticulum membrane. The catalysed reaction is a di-trans,poly-cis-dolichyl diphosphooligosaccharide + L-asparaginyl-[protein] = N(4)-(oligosaccharide-(1-&gt;4)-N-acetyl-beta-D-glucosaminyl-(1-&gt;4)-N-acetyl-beta-D-glucosaminyl)-L-asparaginyl-[protein] + a di-trans,poly-cis-dolichyl diphosphate + H(+). It participates in protein modification; protein glycosylation. Catalytic subunit of the oligosaccharyl transferase (OST) complex that catalyzes the initial transfer of a defined glycan (Glc(3)Man(9)GlcNAc(2) in eukaryotes) from the lipid carrier dolichol-pyrophosphate to an asparagine residue within an Asn-X-Ser/Thr consensus motif in nascent polypeptide chains, the first step in protein N-glycosylation. N-glycosylation occurs cotranslationally and the complex associates with the Sec61 complex at the channel-forming translocon complex that mediates protein translocation across the endoplasmic reticulum (ER). All subunits are required for a maximal enzyme activity. This subunit contains the active site and the acceptor peptide and donor lipid-linked oligosaccharide (LLO) binding pockets. STT3A is present in the majority of OST complexes and mediates cotranslational N-glycosylation of most sites on target proteins, while STT3B-containing complexes are required for efficient post-translational glycosylation and mediate glycosylation of sites that have been skipped by STT3A. STT3A-containing OST-A complex is also required to prevent hyperglycosylation of some target proteins by preventing glycosylation of facultative sites before folding of target proteins is completed. In Canis lupus familiaris (Dog), this protein is Dolichyl-diphosphooligosaccharide--protein glycosyltransferase subunit STT3A.